The following is a 471-amino-acid chain: Monocarboxylate transporter 11 (471 aa).

Positions 1-13 (MPAPQRKHRRGGF) are enriched in basic residues. The segment at 1–31 (MPAPQRKHRRGGFSHRCFPTPQTAMTPQPAG) is disordered. Residues 1–35 (MPAPQRKHRRGGFSHRCFPTPQTAMTPQPAGPPDG) are Cytoplasmic-facing. Over residues 19-28 (PTPQTAMTPQ) the composition is skewed to low complexity. 12 helical membrane-spanning segments follow: residues 36-56 (GWGW…YGLL), 78-98 (AWIS…GSAL), 106-126 (PVVM…AFAS), 131-151 (LYLG…APAL), 163-183 (VLAV…LAPA), 198-218 (LLLG…LPLV), 243-263 (AFSI…VPYV), 273-293 (GLGG…DAGA), 312-332 (LAVF…VPVV), 333-353 (GGEE…GLSA), 367-389 (LVGV…LGGL), and 407-427 (ASFL…IGLP). The Cytoplasmic segment spans residues 428-471 (RALPSCGPASPPATPPPETGELLPAPQAVLLSPGGPGSTLDTTC).

The protein belongs to the major facilitator superfamily. Monocarboxylate porter (TC 2.A.1.13) family. As to quaternary structure, interacts with isoform 2 of BSG. In terms of tissue distribution, expressed in liver, salivary gland and thyroid.

It is found in the endoplasmic reticulum membrane. The protein resides in the cell membrane. It carries out the reaction pyruvate(out) + H(+)(out) = pyruvate(in) + H(+)(in). Proton-linked monocarboxylate transporter. It catalyzes the transport of pyruvate across the plasma membrane. Probably involved in hepatic lipid metabolism: overexpression results in an increase of triacylglycerol(TAG) levels, small increases in intracellular diacylglycerols and decreases in lysophosphatidylcholine, cholesterol ester and sphingomyelin lipids. The sequence is that of Monocarboxylate transporter 11 (SLC16A11) from Homo sapiens (Human).